The primary structure comprises 426 residues: Glutamate-1-semialdehyde 2,1-aminomutase (426 aa).

Position 263 is an N6-(pyridoxal phosphate)lysine (lysine 263).

It belongs to the class-III pyridoxal-phosphate-dependent aminotransferase family. HemL subfamily. Homodimer. The cofactor is pyridoxal 5'-phosphate.

The protein localises to the cytoplasm. The enzyme catalyses (S)-4-amino-5-oxopentanoate = 5-aminolevulinate. It participates in porphyrin-containing compound metabolism; protoporphyrin-IX biosynthesis; 5-aminolevulinate from L-glutamyl-tRNA(Glu): step 2/2. This is Glutamate-1-semialdehyde 2,1-aminomutase from Dichelobacter nodosus (strain VCS1703A).